The sequence spans 106 residues: PTS system fructose-like EIIB component 2 (106 aa).

In terms of domain architecture, PTS EIIB type-2 spans 1–103; sequence MTKIIAVTAC…IMSKIEAHLA (103 aa). Cys-10 functions as the Phosphocysteine intermediate in the catalytic mechanism. Cys-10 bears the Phosphocysteine; by EIIA mark.

The protein resides in the cytoplasm. It carries out the reaction D-fructose(out) + N(pros)-phospho-L-histidyl-[protein] = D-fructose 1-phosphate(in) + L-histidyl-[protein]. The phosphoenolpyruvate-dependent sugar phosphotransferase system (sugar PTS), a major carbohydrate active transport system, catalyzes the phosphorylation of incoming sugar substrates concomitantly with their translocation across the cell membrane. The enzyme II FrwABC PTS system is involved in fructose transport. The chain is PTS system fructose-like EIIB component 2 (frwB) from Escherichia coli O157:H7.